Here is a 367-residue protein sequence, read N- to C-terminus: MNARIRVAVVYGGRSSEHAISCVSAGSILRNLDPDRFEVTAVGITPEGSWVLTEGRPETLAITDGKLPGVTGDSGTALTLTADPARRGQLVSLGEAAGEVLASADVVFPVLHGPYGEDGTIQGLLELAGVPYVGAGVLASAAGMDKEFTKKLLASAGLPVGDHVVLRARDSTLSLQDRERLGLPVFVKPSRGGSSIGVSRVTAWDELPAAIELARRHDPKVIIEAAVPGRELECGVLEFPDGHLEASTLGEIRVEGVRGREDGFYDFETKYLDDGAELDVPAKVDDDVAEAIRALSLRAFTAIDCQGLARVDFFLTDDGPVINEINTMPGFTTISMYPRMWAASGVDYPTLLATMVETALARGTGLR.

The ATP-grasp domain occupies 150–357 (KKLLASAGLP…YPTLLATMVE (208 aa)). 178–233 (RERLGLPVFVKPSRGGSSIGVSRVTAWDELPAAIELARRHDPKVIIEAAVPGRELE) contacts ATP. Mg(2+)-binding residues include aspartate 312, glutamate 324, and asparagine 326.

Belongs to the D-alanine--D-alanine ligase family. Mg(2+) is required as a cofactor. Mn(2+) serves as cofactor.

It localises to the cytoplasm. The enzyme catalyses 2 D-alanine + ATP = D-alanyl-D-alanine + ADP + phosphate + H(+). The protein operates within cell wall biogenesis; peptidoglycan biosynthesis. Functionally, cell wall formation. The protein is D-alanine--D-alanine ligase of Mycolicibacterium gilvum (strain PYR-GCK) (Mycobacterium gilvum (strain PYR-GCK)).